We begin with the raw amino-acid sequence, 202 residues long: NADH-quinone oxidoreductase subunit C (202 aa).

The protein belongs to the complex I 30 kDa subunit family. As to quaternary structure, NDH-1 is composed of 14 different subunits. Subunits NuoB, C, D, E, F, and G constitute the peripheral sector of the complex.

It localises to the cell inner membrane. The catalysed reaction is a quinone + NADH + 5 H(+)(in) = a quinol + NAD(+) + 4 H(+)(out). Functionally, NDH-1 shuttles electrons from NADH, via FMN and iron-sulfur (Fe-S) centers, to quinones in the respiratory chain. The immediate electron acceptor for the enzyme in this species is believed to be ubiquinone. Couples the redox reaction to proton translocation (for every two electrons transferred, four hydrogen ions are translocated across the cytoplasmic membrane), and thus conserves the redox energy in a proton gradient. The polypeptide is NADH-quinone oxidoreductase subunit C (Acidovorax sp. (strain JS42)).